We begin with the raw amino-acid sequence, 1350 residues long: ABC transporter G family member 45 (1350 aa).

A disordered region spans residues 1–23 (MAAAVELTGDGGTTAETRWLSPP). The ABC transporter 1 domain maps to 85–357 (AACAHMCTTR…FETMGFKCPS (273 aa)). 118 to 125 (GAPGSGKT) is a binding site for ATP. The region spanning 434–647 (NIFKACFSRE…AQNAVALNEF (214 aa)) is the ABC transmembrane type-2 1 domain. A run of 6 helical transmembrane segments spans residues 453–473 (VHIFKTIQITVLALVISTLFL), 491–511 (ALFMAVVIVNFNGMTEIAMTI), 523–543 (ILALPGWALLSSVFLLSLPIS), 557–577 (VIGYAPSFVRFIQHFVVLFAM), 597–617 (MANMLGTAALIAIYILGGFVI), and 683–703 (ICVSILFGFSLVFNILSIFAL). Residues 749–1001 (LVFDHINYFV…NMIKYFEAIP (253 aa)) form the ABC transporter 2 domain. 794–801 (GITGAGKT) contributes to the ATP binding site. The 215-residue stretch at 1074 to 1288 (AQCMACLWKQ…TVYGLMFSQL (215 aa)) folds into the ABC transmembrane type-2 2 domain. The next 7 membrane-spanning stretches (helical) occupy residues 1099 to 1119 (INTFAVSIMFGIVFWKIGSTI), 1126 to 1146 (FNILGVVYGSALFLGFMNCSI), 1181 to 1201 (LPYMFVQVFIFSAIVYPMIGF), 1208 to 1228 (FFWFALYMVLSFLYYTLYGMM), 1238 to 1258 (IAAGLSFLIFIFWNVFSGFII), 1269 to 1289 (WVYWANPAAWTVYGLMFSQLG), and 1322 to 1342 (LVTSLHVAIIALFTFLFFLSI).

This sequence belongs to the ABC transporter superfamily. ABCG family. PDR (TC 3.A.1.205) subfamily.

Its subcellular location is the membrane. In terms of biological role, may be a general defense protein. This Oryza sativa subsp. japonica (Rice) protein is ABC transporter G family member 45.